Reading from the N-terminus, the 615-residue chain is Nitrogen permease regulator 2 (615 aa).

The span at 143 to 167 (STTTPSTAGPSSTPNPSSNTTPTHP) shows a compositional bias: low complexity. Disordered stretches follow at residues 143–176 (STTT…TKDM), 354–398 (SLGS…QNSS), and 527–551 (SATG…VSFE). The residue at position 362 (S362) is a Phosphoserine. Residues 373-398 (SSSIPSNPDSRTTSFSSTSRVSQNSS) show a composition bias toward low complexity. Residues 527–539 (SATGSRNTAQSGN) are compositionally biased toward polar residues.

The protein belongs to the NPR2 family. In terms of assembly, component of the SEA complex composed of at least IML1/SEA1, RTC1/SEA2, MTC5/SEA3, NPR2, NPR3, SEA4, SEC13 and SEH1. Forms a heterodimer with NPR3.

The protein localises to the vacuole membrane. Component of the SEA complex which coats the vacuolar membrane and is involved in intracellular trafficking, autophagy, response to nitrogen starvation, and amino acid biogenesis. Mediates inactivation of the TORC1 complex in response to amino acid starvation. Post-transcriptional regulator of nitrogen permeases. May be involved in putative NPR1-dependent phosphorylation of nitrogen permeases or in the processing and targeting of nitrogen permeases at the level of the endoplasmic reticulum. In Saccharomyces cerevisiae (strain ATCC 204508 / S288c) (Baker's yeast), this protein is Nitrogen permease regulator 2 (NPR2).